A 278-amino-acid polypeptide reads, in one-letter code: 2-dehydro-3-deoxyphosphooctonate aldolase (278 aa).

Belongs to the KdsA family.

It is found in the cytoplasm. It carries out the reaction D-arabinose 5-phosphate + phosphoenolpyruvate + H2O = 3-deoxy-alpha-D-manno-2-octulosonate-8-phosphate + phosphate. The protein operates within carbohydrate biosynthesis; 3-deoxy-D-manno-octulosonate biosynthesis; 3-deoxy-D-manno-octulosonate from D-ribulose 5-phosphate: step 2/3. It participates in bacterial outer membrane biogenesis; lipopolysaccharide biosynthesis. The polypeptide is 2-dehydro-3-deoxyphosphooctonate aldolase (Bartonella tribocorum (strain CIP 105476 / IBS 506)).